The chain runs to 314 residues: MINSAVNLLVNPQDYYIKSESREDLPQINLFKLVGNLGYHAMMLEVHLTPKPGLVDLCTNGAHDDMDIHTFENSAQAINPFLIKFLYAGLNHSDTPIDSLLPKLRPVGLNAEEAMFQATSGINTHKGMIFSLGIVCGVIGWLRGNNLSFDAMHISKAVKCCCHDLVFKELRQNHDKPKTYGEFLYKEHGLTGARGEAASGLATVMDHGLPAFEKTVKEGFSTEQALWQSLLVLMANNLDTNLVSRGGMEGLLYAQQAAQGLLVKGGCRYTNLESELTELDEIFTEKKLSPGGSADLLAITWLLAQMNELSPKYV.

It belongs to the CitG/MdcB family.

The enzyme catalyses 3'-dephospho-CoA + ATP = 2'-(5''-triphospho-alpha-D-ribosyl)-3'-dephospho-CoA + adenine. The protein is Probable 2-(5''-triphosphoribosyl)-3'-dephosphocoenzyme-A synthase of Photobacterium profundum (strain SS9).